Reading from the N-terminus, the 395-residue chain is Guanine nucleotide-binding protein subunit beta-5 (395 aa).

WD repeat units follow at residues 103–142 (GHGN…KEHA), 145–184 (MPCT…NENM), 193–234 (MHTN…QSFH), 236–278 (HGAD…QAFE), 279–318 (THES…EVAI), 320–362 (SKES…RVSI), and 365–394 (GHEN…LRVW).

Belongs to the WD repeat G protein beta family. Component of a complex composed of RGS9 (isoform RGS9-1), GNB5 and RGS9BP; within this complex, the presence of GNB5 stabilizes both itself and RGS9 and increases RGS9 GTPase-activating protein (GAP) activity. Interacts with RGS7, forming the RGS7-GNB5 complex; within this complex, the presence of GNB5 increases RGS7 GTPase-activating protein (GAP) activity. Interacts with GPR158; promotes the GTPase activator activity of the RGS7-GNB5 complex in absence of glycine, in contrast GTPase activator activity of the RGS7-GNB5 complex is inhibited in presence of glycine. Interacts with RGS6. Widely expressed.

It is found in the membrane. In terms of biological role, enhances GTPase-activating protein (GAP) activity of regulator of G protein signaling (RGS) proteins, such as RGS7 and RGS9, hence involved in the termination of the signaling initiated by the G protein coupled receptors (GPCRs) by accelerating the GTP hydrolysis on the G-alpha subunits, thereby promoting their inactivation. Increases RGS7 GTPase-activating protein (GAP) activity, thereby regulating mood and cognition. Increases RGS9 GTPase-activating protein (GAP) activity, hence contributes to the deactivation of G protein signaling initiated by D(2) dopamine receptors. May play an important role in neuronal signaling, including in the parasympathetic, but not sympathetic, control of heart rate. In Homo sapiens (Human), this protein is Guanine nucleotide-binding protein subunit beta-5 (GNB5).